We begin with the raw amino-acid sequence, 371 residues long: Homoserine O-acetyltransferase (371 aa).

The AB hydrolase-1 domain occupies 44–350; it reads NAILVEHAWT…SYGHDAFLLE (307 aa). The active-site Nucleophile is the Ser-150. Arg-217 is a substrate binding site. Active-site residues include Asp-311 and His-344. Asp-345 is a substrate binding site.

The protein belongs to the AB hydrolase superfamily. MetX family. Homodimer.

It localises to the cytoplasm. The enzyme catalyses L-homoserine + acetyl-CoA = O-acetyl-L-homoserine + CoA. It functions in the pathway amino-acid biosynthesis; L-methionine biosynthesis via de novo pathway; O-acetyl-L-homoserine from L-homoserine: step 1/1. Functionally, transfers an acetyl group from acetyl-CoA to L-homoserine, forming acetyl-L-homoserine. The protein is Homoserine O-acetyltransferase of Pelobacter propionicus (strain DSM 2379 / NBRC 103807 / OttBd1).